The chain runs to 287 residues: Orotidine 5'-phosphate decarboxylase (287 aa).

The active-site Proton donor is Lys-97.

The protein belongs to the OMP decarboxylase family. Type 2 subfamily.

It catalyses the reaction orotidine 5'-phosphate + H(+) = UMP + CO2. It functions in the pathway pyrimidine metabolism; UMP biosynthesis via de novo pathway; UMP from orotate: step 2/2. In Clostridium perfringens (strain ATCC 13124 / DSM 756 / JCM 1290 / NCIMB 6125 / NCTC 8237 / Type A), this protein is Orotidine 5'-phosphate decarboxylase.